A 228-amino-acid chain; its full sequence is Phosphatidate cytidylyltransferase (228 aa).

Helical transmembrane passes span 31 to 51 (FVVA…LVGL), 65 to 85 (IHYL…LIFL), 93 to 113 (LVIM…MIGG), 131 to 151 (WTGL…VSLI), 165 to 185 (IYLF…DLFI), and 206 to 226 (GVLD…GINI).

It belongs to the CDS family.

The protein localises to the cell membrane. It catalyses the reaction a 1,2-diacyl-sn-glycero-3-phosphate + CTP + H(+) = a CDP-1,2-diacyl-sn-glycerol + diphosphate. The protein operates within phospholipid metabolism; CDP-diacylglycerol biosynthesis; CDP-diacylglycerol from sn-glycerol 3-phosphate: step 3/3. This Rickettsia typhi (strain ATCC VR-144 / Wilmington) protein is Phosphatidate cytidylyltransferase (cdsA).